A 943-amino-acid chain; its full sequence is MSEDDLKVPEELFKDVKFYVVGDIDQKVVQLLKSGKGKEVSYNALATHIIAEDGDNPEVGESREVFDLPVVKPSWVILSVKCGDLLPVTGFSPESGQVFFGVTACLPHLAEDLNALWAFITFYGGDCQLHFNKKCTHLVVPEPKGAKYECALRHNNIKIVTPEWILDSVKEKNRKDEMLYHPRLTLYDAPEEEGSEYENERSSRSEGSYSDRRSPHSRRSSPTSSRDASPAGRRSPSTKHERKSELMFDDSDDSSPEKEDRNLNWTPAEVLPPGPAKRRLQPGKETGLINLCANVPPVPGSFGPPDARMVGAGAGAGGGVPMGVERLEVMSEWNSAARTLRNITNNTDTQQPSRPSNVAHIIQSFSASSKGVVDHMGNQGQSGIPNQLLLKAQQQLPPEAQQQLLQQQQQQSHQLQQQQQQHQMAQQHPMMLPQVMQMHHHQQQQQHQPPPQQQQQQQNQQGFPQMPPQSHQFLQQQMHQQMYSQHQQQQQQQQQQQQQHAFPQQMRPQQLPRLPLQHQQQHVLQQQLQLQQQHRLQLQLQQQQQQQQQQQQQQQQQQQQQQQQQQQQQQQQKQQQQQQQNQQQMHQQYLQQQQHFLQQQLQQQHMQQLQQQQQMQQQQQQHLQNQQPLQHQNQQVNPHQTQTMLQPPITSAQLFGHEPGHDIPEEGFLVGCIFAIADYPEQMADKQLLATWKRIIQLNGGTVDSALNRCTHLLCESQVSNTYLQALREGKRCVTAHWLNTVLKKKKMVPPHRTLHLPFSFPPGAKPCAQHIISVTGFVDSDRDDLKLMAYLAGARYTGYLCRSNTVLICKEPSGLKYEKAKEWRIPCVNAQWLCDILLGNFEALRQIQHSKYTQFNLPDPLAPNHHLVHNLLSAWRIPVKISPEALASLRLQLKQKQADVSVQPPSKRPKLEELPTPTKSFHLIQHLTSFSQALNLCRLSST.

BRCT domains lie at 8 to 93 (VPEE…GFSP) and 94 to 182 (ESGQ…LYHP). Disordered stretches follow at residues 190–281 (PEEE…RRLQ), 400–507 (AQQQ…QQMR), and 620–641 (QQHLQNQQPLQHQNQQVNPHQT). Over residues 198–214 (ENERSSRSEGSYSDRRS) the composition is skewed to basic and acidic residues. Over residues 220–230 (SSPTSSRDASP) the composition is skewed to low complexity. Over residues 620-635 (QQHLQNQQPLQHQNQQ) the composition is skewed to low complexity. 2 BRCT domains span residues 664–756 (PEEG…RTLH) and 763–851 (PGAK…IQHS). The short motif at 730–747 (GKRCVTAHWLNTVLKKKK) is the Nuclear localization signal element.

As to quaternary structure, interacts with smad2 via its last three BRCT domain-containing regions in an activin signal-dependent manner.

Its subcellular location is the nucleus. Functionally, involved in DNA damage response. May function as transcriptional cofactor in TGF beta signaling. Accentuates Smad2-dependent transcription. The protein is PAX-interacting protein 1 (paxip1) of Danio rerio (Zebrafish).